The sequence spans 293 residues: MKITEGYMPFKGFKTYYRIVGENTEGKKPLVLLHGGPGSTHNYFEVLDKIAESGRQVIMYDQIGCGNSFVEGHPELFNADTWIEELIELRKHLGLDEIHLLGQSWGGMQAIWYAIEYKPKGIKSYILSSTLSSAKLWEKEQKRRISYMSEVDQKALLDAVNTGDYSSKEYNDALERFMEMYCAGEVTEDSPECLRRPKKSGSEAYIVGWGQNEFSPTGTLSGYEFTDRLHEIKEPCLVTSGAIDLCSPYIAKTMYDRIPNSKWELFEYSRHMPFVEENEKYIKVLTEWLNAND.

One can recognise an AB hydrolase-1 domain in the interval 28-277 (KPLVLLHGGP…YSRHMPFVEE (250 aa)). Ser104 functions as the Nucleophile in the catalytic mechanism. The active site involves Asp244. His271 functions as the Proton donor in the catalytic mechanism.

The protein belongs to the peptidase S33 family.

It catalyses the reaction Release of N-terminal proline from a peptide.. Releases the N-terminal proline from various substrates. The chain is Proline iminopeptidase from Clostridioides difficile (strain 630) (Peptoclostridium difficile).